Consider the following 215-residue polypeptide: Cytochrome b6 (215 aa).

Residues 32 to 52 (IFYCLGGITLTCFLIQFATGF) form a helical membrane-spanning segment. Cysteine 35 is a binding site for heme c. Positions 86 and 100 each coordinate heme b. 3 helical membrane passes run 90–110 (ASMMVLMMILHVFRVYLTGGF), 116–136 (LTWVSGVILAVITVSFGVTGY), and 186–206 (AHTFVLPWLIAVFMLFHFLMI). Positions 187 and 202 each coordinate heme b.

This sequence belongs to the cytochrome b family. PetB subfamily. As to quaternary structure, the 4 large subunits of the cytochrome b6-f complex are cytochrome b6, subunit IV (17 kDa polypeptide, PetD), cytochrome f and the Rieske protein, while the 4 small subunits are PetG, PetL, PetM and PetN. The complex functions as a dimer. It depends on heme b as a cofactor. Requires heme c as cofactor.

The protein resides in the cellular thylakoid membrane. Functionally, component of the cytochrome b6-f complex, which mediates electron transfer between photosystem II (PSII) and photosystem I (PSI), cyclic electron flow around PSI, and state transitions. The polypeptide is Cytochrome b6 (Desmonostoc sp. (strain PCC 7906) (Nostoc sp. (strain PCC 7906))).